The following is a 545-amino-acid chain: Membrane protein insertase YidC (545 aa).

A run of 6 helical transmembrane segments spans residues 10 to 30 (AVYLSLFFIGIFMLLDDFLFS), 319 to 339 (LLYFLQVPMQLIMQIFYNVIP), 341 to 361 (WGLSIMFLTIVVRILIFPLTF), 407 to 427 (IGGCFPILLQLPVFFALYGLV), 467 to 487 (ILPFIMMITQLLSTIVSSNVS), and 502 to 522 (MPIMFFFILYDMPSGLLIYWI).

Belongs to the OXA1/ALB3/YidC family. Type 1 subfamily. Interacts with the Sec translocase complex via SecD. Specifically interacts with transmembrane segments of nascent integral membrane proteins during membrane integration.

It is found in the cell inner membrane. Required for the insertion and/or proper folding and/or complex formation of integral membrane proteins into the membrane. Involved in integration of membrane proteins that insert both dependently and independently of the Sec translocase complex, as well as at least some lipoproteins. Aids folding of multispanning membrane proteins. This is Membrane protein insertase YidC from Borrelia duttonii (strain Ly).